Here is a 399-residue protein sequence, read N- to C-terminus: MSGFQRIAVLGSTGSIGDSTLDVIARYPERFGVYALSAFSRMDKLAAQALATGAAVVVVPDNNAATRFRQAWSPSRALPEIRVGAQALADTAADAGCDTVMAAIVGIAGLPAALAAAQSGKRVLLANKEALVAAGSIFMSAVRQSGAELLPIDSEHNAIFQCLPQGERAGAPSTPAKTVRKLILTASGGPFRRHSPEDLQDVTPDQACAHPNWSMGRKISVDSATMLNKGLEVIEAHWLFAMPADRIEVLIHPQSVVHSLVEYDDGSVLAQMGQPDMRTPISYGLGFPERLDAGVSPLDLAKWGRLDFETPDLERFPCLRLSYEALRAGQAACVALNAANEIAVAAFLEGRLPYPWIARVIDAALEWQAGRPSVTLDHLTDVLALDAQVRAYAGNLGLA.

NADPH-binding residues include T13, G14, S15, I16, and N127. K128 contributes to the 1-deoxy-D-xylulose 5-phosphate binding site. Residue E129 coordinates NADPH. D153 contacts Mn(2+). Positions 154, 155, 187, and 210 each coordinate 1-deoxy-D-xylulose 5-phosphate. Mn(2+) is bound at residue E155. G216 contributes to the NADPH binding site. Positions 223, 228, 229, and 232 each coordinate 1-deoxy-D-xylulose 5-phosphate. E232 contributes to the Mn(2+) binding site.

This sequence belongs to the DXR family. Requires Mg(2+) as cofactor. The cofactor is Mn(2+).

It carries out the reaction 2-C-methyl-D-erythritol 4-phosphate + NADP(+) = 1-deoxy-D-xylulose 5-phosphate + NADPH + H(+). It functions in the pathway isoprenoid biosynthesis; isopentenyl diphosphate biosynthesis via DXP pathway; isopentenyl diphosphate from 1-deoxy-D-xylulose 5-phosphate: step 1/6. In terms of biological role, catalyzes the NADPH-dependent rearrangement and reduction of 1-deoxy-D-xylulose-5-phosphate (DXP) to 2-C-methyl-D-erythritol 4-phosphate (MEP). The protein is 1-deoxy-D-xylulose 5-phosphate reductoisomerase of Bordetella avium (strain 197N).